The chain runs to 873 residues: Nonsense-mediated mRNA decay factor SMG8 (873 aa).

Positions 531-604 are disordered; sequence AKKMAQREDE…ESMASKTERE (74 aa). Residues 540–550 are compositionally biased toward acidic residues; it reads ELAEEDTDLDI. 2 stretches are compositionally biased toward low complexity: residues 551–562 and 574–583; these read PESLLDPDSTSP and SSSESSSQES. Residues 591-604 show a composition bias toward basic and acidic residues; sequence SRRDESMASKTERE.

It belongs to the SMG8 family.

Its function is as follows. Involved in nonsense-mediated decay (NMD) of mRNAs containing premature stop codons. Probable component of kinase complex containing smg-1 and recruited to stalled ribosomes. The chain is Nonsense-mediated mRNA decay factor SMG8 (smg-8) from Caenorhabditis elegans.